The sequence spans 359 residues: Glycerol-1-phosphate dehydrogenase [NAD(P)+] (359 aa).

NAD(+) contacts are provided by residues 107–111 (GRVID) and 129–132 (TAAS). Substrate is bound at residue Asp-134. Residue Ser-138 participates in NAD(+) binding. Asp-181 serves as a coordination point for substrate. Asp-181 and His-261 together coordinate Zn(2+). His-265 provides a ligand contact to substrate. A Zn(2+)-binding site is contributed by His-277.

It belongs to the glycerol-1-phosphate dehydrogenase family. Zn(2+) is required as a cofactor.

Its subcellular location is the cytoplasm. The enzyme catalyses sn-glycerol 1-phosphate + NAD(+) = dihydroxyacetone phosphate + NADH + H(+). The catalysed reaction is sn-glycerol 1-phosphate + NADP(+) = dihydroxyacetone phosphate + NADPH + H(+). Its pathway is membrane lipid metabolism; glycerophospholipid metabolism. Functionally, catalyzes the NAD(P)H-dependent reduction of dihydroxyacetonephosphate (DHAP or glycerone phosphate) to glycerol 1-phosphate (G1P). The G1P thus generated is used as the glycerophosphate backbone of phospholipids in the cellular membranes of Archaea. The polypeptide is Glycerol-1-phosphate dehydrogenase [NAD(P)+] (Methanoregula boonei (strain DSM 21154 / JCM 14090 / 6A8)).